A 282-amino-acid polypeptide reads, in one-letter code: 4-diphosphocytidyl-2-C-methyl-D-erythritol kinase (282 aa).

Lys9 is a catalytic residue. Residue 98–108 coordinates ATP; it reads PMGGGLGGGSS. Residue Asp140 is part of the active site.

This sequence belongs to the GHMP kinase family. IspE subfamily. In terms of assembly, homodimer.

It carries out the reaction 4-CDP-2-C-methyl-D-erythritol + ATP = 4-CDP-2-C-methyl-D-erythritol 2-phosphate + ADP + H(+). Its pathway is isoprenoid biosynthesis; isopentenyl diphosphate biosynthesis via DXP pathway; isopentenyl diphosphate from 1-deoxy-D-xylulose 5-phosphate: step 3/6. Its function is as follows. Catalyzes the phosphorylation of the position 2 hydroxy group of 4-diphosphocytidyl-2C-methyl-D-erythritol. In Klebsiella pneumoniae (strain 342), this protein is 4-diphosphocytidyl-2-C-methyl-D-erythritol kinase.